A 218-amino-acid polypeptide reads, in one-letter code: Large ribosomal subunit protein uL3 (218 aa).

At Gln-154 the chain carries N5-methylglutamine.

This sequence belongs to the universal ribosomal protein uL3 family. In terms of assembly, part of the 50S ribosomal subunit. Forms a cluster with proteins L14 and L19. In terms of processing, methylated by PrmB.

Its function is as follows. One of the primary rRNA binding proteins, it binds directly near the 3'-end of the 23S rRNA, where it nucleates assembly of the 50S subunit. In Polynucleobacter asymbioticus (strain DSM 18221 / CIP 109841 / QLW-P1DMWA-1) (Polynucleobacter necessarius subsp. asymbioticus), this protein is Large ribosomal subunit protein uL3.